The sequence spans 816 residues: Endo-acting ulvan lyase (816 aa).

The N-terminal stretch at 1-23 (MGTSVRRISVVLMMLFGTNFCWS) is a signal peptide.

This sequence belongs to the polysaccharide lyase family.

It is found in the cell surface. It localises to the periplasm. Ulvan lyase involved in ulvan degradation. Ulvan is the main polysaccharide component of the Ulvales (green seaweed) cell wall. It is composed of disaccharide building blocks comprising 3-sulfated rhamnose (Rha3S) linked to D-glucuronic acid (GlcA), L-iduronic acid (IduA), or D-xylose (Xyl). Ulvan lyase catalyzes the endolytic cleavage of the glycosidic bond between Rha3S and the uronic acids GlcA or IduA, producing oligosaccharides that have unsaturated 4-deoxy-L-threo-hex-4-enopyranosiduronic acid (deltaUA) at the non-reducing end. This results eventually in the degradation of the ulvan polysaccharide into deltaUA-Rha3S disaccharides and deltaUA-Rha3S-Xyl-Rha3S tetrasaccharides. The sequence is that of Endo-acting ulvan lyase from Formosa agariphila (strain DSM 15362 / KCTC 12365 / LMG 23005 / KMM 3901 / M-2Alg 35-1).